The chain runs to 413 residues: MTPSISWRLLLLAGLCCLVPSYLAEDVQETDTSQKDQSPASHEMATNLGDFAFSLYRELVHQSNTSNIFFSPVSIATAFALLSLGSKGDTQTQILEGLQFNLTQTSEADIHKVFQHLLQTLNRPDSELQLSTGNGLFVNNDLKLVEKFLEEAKNHYQSEVFSVNFAKSEEARKMINDFVEKGTQGKIVDAVKDLDEDTVFALANYIFFQGKWKTPFDPEHTTEADFHVNESTTVRVPMMNLMRMLDVHYCSTLSSWVLMMDYLGNATAVFLLPDDGKMQHLEQTLNKELISKFLLNRHRSLAEIHFPRLSISGSYNLKALMAPLGITRVFNNGADLSGITEENAPLRLSKAVHKAVLTIDERGTEAAATTIVEAVFMSLPPILHFNHPFVFTIVETHTQTPLFVGKVVDPTRK.

The first 24 residues, 1 to 24, serve as a signal peptide directing secretion; that stretch reads MTPSISWRLLLLAGLCCLVPSYLA. Ser33 carries the phosphoserine modification. Asn64, Asn101, and Asn265 each carry an N-linked (GlcNAc...) asparagine glycan. An RCL region spans residues 368–387; sequence ATTIVEAVFMSLPPILHFNH. Ser378 bears the Phosphoserine mark.

Belongs to the serpin family. Interacts with CELA2A. Interacts with ERGIC3 and LMAN1/ERGIC53. Interacts with PRSS1/Trypsin.

It localises to the secreted. Its function is as follows. Inhibitor of serine proteases. The primary target is elastase, but also has a moderate affinity for plasmin and thrombin. The chain is Alpha-1-antiproteinase (Serpina1) from Mus saxicola (Brown spiny mouse).